Reading from the N-terminus, the 313-residue chain is MAIYLDFENHIKEIQNEIELALIRGDEDAKEILEKRLDKEVKTIYSNLTDFQKLQLARHPDRPYAMDYIDLILKDKYEVFGDRHYNDDKAIVCFIGKIDNIPVVVIGEEKGRGTKNKLLRNFGMPNPCGYRKALKMAKFAEKFNLPILMLVDTAGAYPGIGAEERGQSEAIAKNLQEFASLKVPTISIIIGEGGSGGALAIAVADKLAMMEYSIFSVISPEGCAAILWDDPSKTEVAIKAMKITPRDLKEAGLIDDIILEPSKGAHRNKISAANTIKEYFLDTLRTIQQDPHFLDNRYKKLMSLGSFVESMPH.

The region spanning 36-286 (RLDKEVKTIY…KEYFLDTLRT (251 aa)) is the CoA carboxyltransferase C-terminal domain.

The protein belongs to the AccA family. As to quaternary structure, acetyl-CoA carboxylase is a heterohexamer composed of biotin carboxyl carrier protein (AccB), biotin carboxylase (AccC) and two subunits each of ACCase subunit alpha (AccA) and ACCase subunit beta (AccD).

The protein localises to the cytoplasm. The catalysed reaction is N(6)-carboxybiotinyl-L-lysyl-[protein] + acetyl-CoA = N(6)-biotinyl-L-lysyl-[protein] + malonyl-CoA. It participates in lipid metabolism; malonyl-CoA biosynthesis; malonyl-CoA from acetyl-CoA: step 1/1. Functionally, component of the acetyl coenzyme A carboxylase (ACC) complex. First, biotin carboxylase catalyzes the carboxylation of biotin on its carrier protein (BCCP) and then the CO(2) group is transferred by the carboxyltransferase to acetyl-CoA to form malonyl-CoA. The protein is Acetyl-coenzyme A carboxylase carboxyl transferase subunit alpha of Helicobacter acinonychis (strain Sheeba).